The sequence spans 513 residues: ATP synthase subunit alpha (513 aa).

Residue 169–176 coordinates ATP; that stretch reads GDRQCGKT.

Belongs to the ATPase alpha/beta chains family. As to quaternary structure, F-type ATPases have 2 components, CF(1) - the catalytic core - and CF(0) - the membrane proton channel. CF(1) has five subunits: alpha(3), beta(3), gamma(1), delta(1), epsilon(1). CF(0) has three main subunits: a(1), b(2) and c(9-12). The alpha and beta chains form an alternating ring which encloses part of the gamma chain. CF(1) is attached to CF(0) by a central stalk formed by the gamma and epsilon chains, while a peripheral stalk is formed by the delta and b chains.

The protein resides in the cell inner membrane. It catalyses the reaction ATP + H2O + 4 H(+)(in) = ADP + phosphate + 5 H(+)(out). Produces ATP from ADP in the presence of a proton gradient across the membrane. The alpha chain is a regulatory subunit. The polypeptide is ATP synthase subunit alpha (Burkholderia ambifaria (strain MC40-6)).